We begin with the raw amino-acid sequence, 452 residues long: 3-phosphoshikimate 1-carboxyvinyltransferase (452 aa).

The disordered stretch occupies residues 1-23 (MLNGSASKPATARKSAGLTGSVR). Positions 28, 29, and 33 each coordinate 3-phosphoshikimate. Lys28 is a binding site for phosphoenolpyruvate. Phosphoenolpyruvate is bound by residues Gly100 and Arg128. Ser173, Gln175, Asp326, and Lys353 together coordinate 3-phosphoshikimate. Gln175 provides a ligand contact to phosphoenolpyruvate. The active-site Proton acceptor is the Asp326. Phosphoenolpyruvate is bound by residues Arg357 and Arg405.

It belongs to the EPSP synthase family. In terms of assembly, monomer.

The protein localises to the cytoplasm. The enzyme catalyses 3-phosphoshikimate + phosphoenolpyruvate = 5-O-(1-carboxyvinyl)-3-phosphoshikimate + phosphate. Its pathway is metabolic intermediate biosynthesis; chorismate biosynthesis; chorismate from D-erythrose 4-phosphate and phosphoenolpyruvate: step 6/7. In terms of biological role, catalyzes the transfer of the enolpyruvyl moiety of phosphoenolpyruvate (PEP) to the 5-hydroxyl of shikimate-3-phosphate (S3P) to produce enolpyruvyl shikimate-3-phosphate and inorganic phosphate. This Rhizobium johnstonii (strain DSM 114642 / LMG 32736 / 3841) (Rhizobium leguminosarum bv. viciae) protein is 3-phosphoshikimate 1-carboxyvinyltransferase.